The primary structure comprises 572 residues: Proline--tRNA ligase (572 aa).

Belongs to the class-II aminoacyl-tRNA synthetase family. ProS type 1 subfamily. As to quaternary structure, homodimer.

The protein localises to the cytoplasm. It carries out the reaction tRNA(Pro) + L-proline + ATP = L-prolyl-tRNA(Pro) + AMP + diphosphate. Its function is as follows. Catalyzes the attachment of proline to tRNA(Pro) in a two-step reaction: proline is first activated by ATP to form Pro-AMP and then transferred to the acceptor end of tRNA(Pro). As ProRS can inadvertently accommodate and process non-cognate amino acids such as alanine and cysteine, to avoid such errors it has two additional distinct editing activities against alanine. One activity is designated as 'pretransfer' editing and involves the tRNA(Pro)-independent hydrolysis of activated Ala-AMP. The other activity is designated 'posttransfer' editing and involves deacylation of mischarged Ala-tRNA(Pro). The misacylated Cys-tRNA(Pro) is not edited by ProRS. This Salmonella schwarzengrund (strain CVM19633) protein is Proline--tRNA ligase.